A 652-amino-acid chain; its full sequence is Acetyl-coenzyme A synthetase (652 aa).

CoA is bound by residues Arg189–Lys192 and Thr311. ATP contacts are provided by residues Gly387 to Pro389, Asp411 to Thr416, Asp500, and Arg515. Ser523 is a binding site for CoA. Arg526 contributes to the ATP binding site. Mg(2+)-binding residues include Val537, His539, and Val542. Arg584 is a CoA binding site. Lys609 is modified (N6-acetyllysine).

It belongs to the ATP-dependent AMP-binding enzyme family. It depends on Mg(2+) as a cofactor. Acetylated. Deacetylation by the SIR2-homolog deacetylase activates the enzyme.

The enzyme catalyses acetate + ATP + CoA = acetyl-CoA + AMP + diphosphate. Its function is as follows. Catalyzes the conversion of acetate into acetyl-CoA (AcCoA), an essential intermediate at the junction of anabolic and catabolic pathways. AcsA undergoes a two-step reaction. In the first half reaction, AcsA combines acetate with ATP to form acetyl-adenylate (AcAMP) intermediate. In the second half reaction, it can then transfer the acetyl group from AcAMP to the sulfhydryl group of CoA, forming the product AcCoA. The polypeptide is Acetyl-coenzyme A synthetase (Bartonella henselae (strain ATCC 49882 / DSM 28221 / CCUG 30454 / Houston 1) (Rochalimaea henselae)).